A 336-amino-acid polypeptide reads, in one-letter code: Glyceraldehyde-3-phosphate dehydrogenase (336 aa).

Residues 12 to 13 (RI), Asp-34, Arg-78, and Thr-121 contribute to the NAD(+) site. D-glyceraldehyde 3-phosphate-binding positions include 151–153 (SCT), Thr-182, Arg-199, 212–213 (TG), and Arg-235. The active-site Nucleophile is the Cys-152. An NAD(+)-binding site is contributed by Asn-316.

It belongs to the glyceraldehyde-3-phosphate dehydrogenase family. As to quaternary structure, homotetramer.

It is found in the cytoplasm. The catalysed reaction is D-glyceraldehyde 3-phosphate + phosphate + NAD(+) = (2R)-3-phospho-glyceroyl phosphate + NADH + H(+). It participates in carbohydrate degradation; glycolysis; pyruvate from D-glyceraldehyde 3-phosphate: step 1/5. Catalyzes the oxidative phosphorylation of glyceraldehyde 3-phosphate (G3P) to 1,3-bisphosphoglycerate (BPG) using the cofactor NAD. The first reaction step involves the formation of a hemiacetal intermediate between G3P and a cysteine residue, and this hemiacetal intermediate is then oxidized to a thioester, with concomitant reduction of NAD to NADH. The reduced NADH is then exchanged with the second NAD, and the thioester is attacked by a nucleophilic inorganic phosphate to produce BPG. This Streptococcus pyogenes serotype M1 protein is Glyceraldehyde-3-phosphate dehydrogenase (gap).